Here is a 268-residue protein sequence, read N- to C-terminus: Undecaprenyl-diphosphatase (268 aa).

7 helical membrane passes run Phe-47 to Leu-67, Phe-83 to Gly-103, Leu-109 to Val-129, Phe-144 to Val-164, Ala-184 to Leu-204, Leu-217 to Phe-237, and Phe-246 to Leu-266.

It belongs to the UppP family.

The protein resides in the cell inner membrane. The catalysed reaction is di-trans,octa-cis-undecaprenyl diphosphate + H2O = di-trans,octa-cis-undecaprenyl phosphate + phosphate + H(+). In terms of biological role, catalyzes the dephosphorylation of undecaprenyl diphosphate (UPP). Confers resistance to bacitracin. This Rhodopseudomonas palustris (strain BisB18) protein is Undecaprenyl-diphosphatase.